A 1373-amino-acid chain; its full sequence is MFSGSNSYLGGNSGRQPPQQQPQQQQQYGGFQPNQGFQPQQTGFQPQQTGFQPQPTGYGNVAPLQPNFTGYPLQAQPTGYSQPPQSGFPGGQQQFNNAPQQQSFQTGAPPMPQIPQQFQQQPQQIQQAQPSPAAPVQQPQATGFAAMADSFKSASEPSKPRGRRASKGGAKIPSIRLSFITAQDQAKFETLFKSAVGDGQTLSGEKSRDLLLRSKLDGNSLSQIWTLADTTRSGQLHFPEFALAMYLCNLKLVGKSLPSVLPDQIKNEVSSMVDIINFAIEDDGPAGTNAPSFDSRQSTATPPTIQQPQPMPSNSALLTAQMTGFPGQQNNFSGGFQSQPTGFQSSMQTGFPGQQGGLQPQPTGFSQNMSNPQATGYTGPRPPMPPMPSNFSSNLSPAQTGMQGGMIAPLNSQPTGVPGQWGLVNAPATGLPNIDLLQSRMMPQQGREQGNFTTAGITGNAVIPWAVTKEEKTRYDSVFKAWDGFGKGFIGGDVAIEVFGQSGLEKPDLERIWTLSDHGNKGKLNMDEFAVAMHLIYRKLNGYPLPAQLPPELVPPSTRNFNDSIGAVKSLLHQESDFRKNSGATLLPQKTGLKKKVREKQVLLDAIDFKDENAADEDDALDRKDRREAEDLYRRIRRIQEDIDAHPDASLRNVDSGAERRAMKRQLQTLTDKLPDIASRVRRTERSIADAKLELFRLKDAKAHPGSASSIVGTGPGGAVTESDRLKARAKAMMQQRSAALTGKKIEISNDDLDAPKRLEEENLKIRTEKENNERMVQDVEESVRDFSRGLEDSLKDGGESSSSEHEKRRWEDGLGVEDEVKDFIFDLQRSSRSAKVRTDDRSREAPTETSRVSSAPAARSETPSSQPSSTPTPSAGTYSQYKTAEDRAAYIKQQAEQRMAERLAALGIRAPSKPGETTQQRLEREKNERAAKLKQAEEEDARREAERQARIAEEQGVAPHTPDQPKEITKKPPPPPSRKAARSDASERKFEEDRILKEQKSQIIATNELEDDAQRQENELAKEREAAQARVKALEEQMKAGKLKKEEEKKKRKALQAETKQQEARLAAQRAEIEAAQARERELQRQLEAIDDSDSSDDDEGPEQVTPQASTPTQGSQEFERKEASPPPPPPSVPVIVSPVPAAATTTSLPPPTPQVTSPVVSPPAETETRNPFLKKMAQSGDASAASTASNNPFHRLPSQELPAPAPIQVQPTGNRPSRVRPEEDDWDVVGSDKEDDSSDDEGPGAGGARHLASILFGTMGPPRPLSAMGNEATSAPHSPAAASPPVASPPPPPPMPSAGAPGGPPPPPPPPPPGMGAPPPPPMPPMGGAPAAPPAGGRPAGFLGEIQMGKALKKTQTKDKSAAATAGRVLD.

Low complexity-rich tracts occupy residues 1–59, 81–105, and 114–141; these read MFSG…TGYG, SQPPQSGFPGGQQQFNNAPQQQSFQ, and IPQQFQQQPQQIQQAQPSPAAPVQQPQA. Residues 1 to 170 are disordered; that stretch reads MFSGSNSYLG…RGRRASKGGA (170 aa). In terms of domain architecture, EH 1 spans 184–272; it reads DQAKFETLFK…DQIKNEVSSM (89 aa). Residues 216–251 enclose the EF-hand 1 domain; it reads LDGNSLSQIWTLADTTRSGQLHFPEFALAMYLCNLK. Disordered stretches follow at residues 283 to 309 and 339 to 359; these read DGPAGTNAPSFDSRQSTATPPTIQQPQ and QPTGFQSSMQTGFPGQQGGLQ. Positions 289 to 298 are enriched in polar residues; that stretch reads NAPSFDSRQS. 2 stretches are compositionally biased toward low complexity: residues 299-308 and 348-359; these read TATPPTIQQP and QTGFPGQQGGLQ. In terms of domain architecture, EH 2 spans 471–560; that stretch reads EKTRYDSVFK…PELVPPSTRN (90 aa). The 36-residue stretch at 504 to 539 folds into the EF-hand 2 domain; sequence LEKPDLERIWTLSDHGNKGKLNMDEFAVAMHLIYRK. Positions 757–789 form a coiled coil; that stretch reads KRLEEENLKIRTEKENNERMVQDVEESVRDFSR. Disordered regions lie at residues 764-812, 828-882, and 903-1373; these read LKIR…RRWE, LQRS…YSQY, and RLAA…RVLD. The span at 837–847 shows a compositional bias: basic and acidic residues; the sequence is VRTDDRSREAP. Low complexity predominate over residues 861–880; the sequence is SETPSSQPSSTPTPSAGTYS. 2 coiled-coil regions span residues 917–959 and 1001–1094; these read ETTQ…QGVA and KSQI…IDDS. Composition is skewed to basic and acidic residues over residues 922–954, 982–1001, 1013–1050, and 1072–1086; these read RLEREKNERAAKLKQAEEEDARREAERQARIAE, ARSDASERKFEEDRILKEQK, DAQRQENELAKEREAAQARVKALEEQMKAGKLKKEEEK, and AEIEAAQARERELQR. Residues 1090–1103 show a composition bias toward acidic residues; sequence AIDDSDSSDDDEGP. Polar residues predominate over residues 1106 to 1118; sequence VTPQASTPTQGSQ. Low complexity-rich tracts occupy residues 1135–1149 and 1156–1166; these read PVIVSPVPAAATTTS and QVTSPVVSPPA. Polar residues predominate over residues 1182 to 1194; the sequence is GDASAASTASNNP. Positions 1224–1244 are enriched in acidic residues; the sequence is EEDDWDVVGSDKEDDSSDDEG. A compositionally biased stretch (low complexity) spans 1277–1287; sequence APHSPAAASPP. Residues 1288 to 1335 are compositionally biased toward pro residues; sequence VASPPPPPPMPSAGAPGGPPPPPPPPPPGMGAPPPPPMPPMGGAPAAP. The region spanning 1340-1357 is the WH2 domain; the sequence is RPAGFLGEIQMGKALKKT.

Belongs to the PAN1 family. Component of the PAN1 actin cytoskeleton-regulatory complex.

It is found in the cell membrane. It localises to the endosome membrane. The protein resides in the cytoplasm. Its subcellular location is the cytoskeleton. The protein localises to the actin patch. Its function is as follows. Component of the PAN1 actin cytoskeleton-regulatory complex required for the internalization of endosomes during actin-coupled endocytosis. The complex links the site of endocytosis to the cell membrane-associated actin cytoskeleton. Mediates uptake of external molecules and vacuolar degradation of plasma membrane proteins. Plays a role in the proper organization of the cell membrane-associated actin cytoskeleton and promotes its destabilization. The protein is Actin cytoskeleton-regulatory complex protein pan1 (pan1) of Sclerotinia sclerotiorum (strain ATCC 18683 / 1980 / Ss-1) (White mold).